The primary structure comprises 252 residues: Imidazole glycerol phosphate synthase subunit HisF (252 aa).

Catalysis depends on residues Asp-11 and Asp-130.

It belongs to the HisA/HisF family. As to quaternary structure, heterodimer of HisH and HisF.

The protein resides in the cytoplasm. It catalyses the reaction 5-[(5-phospho-1-deoxy-D-ribulos-1-ylimino)methylamino]-1-(5-phospho-beta-D-ribosyl)imidazole-4-carboxamide + L-glutamine = D-erythro-1-(imidazol-4-yl)glycerol 3-phosphate + 5-amino-1-(5-phospho-beta-D-ribosyl)imidazole-4-carboxamide + L-glutamate + H(+). The protein operates within amino-acid biosynthesis; L-histidine biosynthesis; L-histidine from 5-phospho-alpha-D-ribose 1-diphosphate: step 5/9. Its function is as follows. IGPS catalyzes the conversion of PRFAR and glutamine to IGP, AICAR and glutamate. The HisF subunit catalyzes the cyclization activity that produces IGP and AICAR from PRFAR using the ammonia provided by the HisH subunit. The protein is Imidazole glycerol phosphate synthase subunit HisF of Alkaliphilus metalliredigens (strain QYMF).